The chain runs to 94 residues: MKFIKETKEGVLIMIYVQPKAKKNAIEGVDGWRGRLKVRIAAPPVEGKANKEVVKFFSKLLGAEVNIVRGETSREKDLLVKGLSVEEVRKKLGV.

The protein belongs to the UPF0235 family.

This Thermococcus kodakarensis (strain ATCC BAA-918 / JCM 12380 / KOD1) (Pyrococcus kodakaraensis (strain KOD1)) protein is UPF0235 protein TK0768.